Reading from the N-terminus, the 273-residue chain is Octanoyl-[GcvH]:protein N-octanoyltransferase (273 aa).

The 206-residue stretch at 40–245 (ATEGAAIRSW…SLMELGATLT (206 aa)) folds into the BPL/LPL catalytic domain. The active-site Acyl-thioester intermediate is the Cys-144.

Belongs to the octanoyltransferase LipL family.

The catalysed reaction is N(6)-octanoyl-L-lysyl-[glycine-cleavage complex H protein] + L-lysyl-[lipoyl-carrier protein] = N(6)-octanoyl-L-lysyl-[lipoyl-carrier protein] + L-lysyl-[glycine-cleavage complex H protein]. Its pathway is protein modification; protein lipoylation via endogenous pathway; protein N(6)-(lipoyl)lysine from octanoyl-[acyl-carrier-protein]. Its function is as follows. Catalyzes the amidotransfer (transamidation) of the octanoyl moiety from octanoyl-GcvH to the lipoyl domain of the E2 subunit of lipoate-dependent enzymes. The sequence is that of Octanoyl-[GcvH]:protein N-octanoyltransferase from Exiguobacterium sibiricum (strain DSM 17290 / CCUG 55495 / CIP 109462 / JCM 13490 / 255-15).